We begin with the raw amino-acid sequence, 306 residues long: Choline-binding protein (306 aa).

The first 22 residues, 1–22 (MKRKYLKLMIGLALAATLTLSG), serve as a signal peptide directing secretion. Residue Cys-23 is the site of N-palmitoyl cysteine attachment. Cys-23 is lipidated: S-diacylglycerol cysteine.

Belongs to the OsmX family.

Its subcellular location is the cell membrane. Its function is as follows. Member of a high affinity multicomponent binding-protein-dependent transport system for choline. The protein is Choline-binding protein (opuBC) of Bacillus subtilis (strain 168).